Consider the following 118-residue polypeptide: Large ribosomal subunit protein bL20 (118 aa).

The protein belongs to the bacterial ribosomal protein bL20 family.

Functionally, binds directly to 23S ribosomal RNA and is necessary for the in vitro assembly process of the 50S ribosomal subunit. It is not involved in the protein synthesizing functions of that subunit. The sequence is that of Large ribosomal subunit protein bL20 from Bacillus cytotoxicus (strain DSM 22905 / CIP 110041 / 391-98 / NVH 391-98).